The sequence spans 320 residues: Beta-carotene 4-ketolase 3 (320 aa).

The catalysed reaction is echinenone + 2 AH2 + 2 O2 = canthaxanthin + 2 A + 3 H2O. The enzyme catalyses all-trans-beta-carotene + 2 AH2 + 2 O2 = echinenone + 2 A + 3 H2O. It functions in the pathway carotenoid biosynthesis. Functionally, involved in the biosynthesis of ketocarotenoids which are powerful anti-oxidative molecules. Catalyzes the conversion of beta-carotene to canthaxanthin via echinenone. The polypeptide is Beta-carotene 4-ketolase 3 (Haematococcus lacustris (Green alga)).